The following is a 420-amino-acid chain: D-inositol 3-phosphate glycosyltransferase (420 aa).

Histidine 13 contributes to the 1D-myo-inositol 3-phosphate binding site. UDP-N-acetyl-alpha-D-glucosamine-binding positions include 19 to 20 (QP) and glycine 27. 1D-myo-inositol 3-phosphate-binding positions include 24–29 (DAGGMN), lysine 82, tyrosine 115, threonine 139, and arginine 159. 3 residues coordinate UDP-N-acetyl-alpha-D-glucosamine: arginine 233, lysine 238, and valine 294. The Mg(2+) site is built by phenylalanine 303, arginine 304, and alanine 306. Glutamate 316 and glutamate 324 together coordinate UDP-N-acetyl-alpha-D-glucosamine. A Mg(2+)-binding site is contributed by threonine 330.

Belongs to the glycosyltransferase group 1 family. MshA subfamily. In terms of assembly, homodimer.

It carries out the reaction 1D-myo-inositol 3-phosphate + UDP-N-acetyl-alpha-D-glucosamine = 1D-myo-inositol 2-acetamido-2-deoxy-alpha-D-glucopyranoside 3-phosphate + UDP + H(+). In terms of biological role, catalyzes the transfer of a N-acetyl-glucosamine moiety to 1D-myo-inositol 3-phosphate to produce 1D-myo-inositol 2-acetamido-2-deoxy-glucopyranoside 3-phosphate in the mycothiol biosynthesis pathway. This Pseudarthrobacter chlorophenolicus (strain ATCC 700700 / DSM 12829 / CIP 107037 / JCM 12360 / KCTC 9906 / NCIMB 13794 / A6) (Arthrobacter chlorophenolicus) protein is D-inositol 3-phosphate glycosyltransferase.